Reading from the N-terminus, the 454-residue chain is Guanine deaminase (454 aa).

Positions 82 and 84 each coordinate Zn(2+). Residues 84 to 87 (HASQ), 213 to 214 (RF), 240 to 243 (HISE), and aspartate 330 contribute to the substrate site. Zn(2+) is bound by residues histidine 240 and aspartate 330. Serine 453 is modified (phosphoserine).

Belongs to the metallo-dependent hydrolases superfamily. ATZ/TRZ family. Homodimer. Requires Zn(2+) as cofactor.

It carries out the reaction guanine + H2O + H(+) = xanthine + NH4(+). It participates in purine metabolism; guanine degradation; xanthine from guanine: step 1/1. Functionally, catalyzes the hydrolytic deamination of guanine, producing xanthine and ammonia. This chain is Guanine deaminase, found in Homo sapiens (Human).